The following is an 86-amino-acid chain: Large ribosomal subunit protein bL27 (86 aa).

The segment at 1–24 (MAHKKGTGSTRNGRDSNSKRLGVK) is disordered.

This sequence belongs to the bacterial ribosomal protein bL27 family.

This Prochlorococcus marinus (strain MIT 9301) protein is Large ribosomal subunit protein bL27.